The sequence spans 210 residues: Transmembrane protein 61 (210 aa).

2 helical membrane passes run 18 to 38 (YCMTVSGTVVLVAGTLCFAWW) and 69 to 89 (VSFVCCGAGGLLLLIGLLWSV). Residues 140–172 (VAEGPPTPPAYPTEEALEPSGSRDALLSTQPAW) are disordered.

Its subcellular location is the membrane. This is Transmembrane protein 61 (TMEM61) from Homo sapiens (Human).